Here is a 109-residue protein sequence, read N- to C-terminus: Nucleoid-associated protein Bcer98_0019 (109 aa).

Belongs to the YbaB/EbfC family. As to quaternary structure, homodimer.

The protein localises to the cytoplasm. The protein resides in the nucleoid. Its function is as follows. Binds to DNA and alters its conformation. May be involved in regulation of gene expression, nucleoid organization and DNA protection. This is Nucleoid-associated protein Bcer98_0019 from Bacillus cytotoxicus (strain DSM 22905 / CIP 110041 / 391-98 / NVH 391-98).